Consider the following 474-residue polypeptide: Cysteine--tRNA ligase (474 aa).

C30 is a Zn(2+) binding site. The short motif at 32 to 42 is the 'HIGH' region element; it reads PTVYNYAHIGN. Residues C215, H240, and E244 each contribute to the Zn(2+) site. Positions 272–276 match the 'KMSKS' region motif; the sequence is KMSKS. K275 contacts ATP.

The protein belongs to the class-I aminoacyl-tRNA synthetase family. In terms of assembly, monomer. It depends on Zn(2+) as a cofactor.

It is found in the cytoplasm. It catalyses the reaction tRNA(Cys) + L-cysteine + ATP = L-cysteinyl-tRNA(Cys) + AMP + diphosphate. The protein is Cysteine--tRNA ligase of Brachyspira hyodysenteriae (strain ATCC 49526 / WA1).